The following is a 268-amino-acid chain: Mesoderm posterior protein 1 (268 aa).

The segment at 17–93 (AAWGPTRRPP…RQSASEREKL (77 aa)) is disordered. The span at 36–48 (LVSSPDSWGSTPA) shows a compositional bias: polar residues. A compositionally biased stretch (low complexity) spans 66–86 (APSVGRRGARSSRLGSGQRQS). Residues 82–136 (GQRQSASEREKLRMRTLARALHELRRFLPPSVAPAGQSLTKIETLRLAIRYIGHL) enclose the bHLH domain. The CPLCP motif lies at 163-167 (CPLCP). 2 consecutive repeat copies span residues 182–183 (GQ) and 184–185 (GQ). A 2 X 2 AA tandem repeats of G-Q region spans residues 182–185 (GQGQ).

It localises to the nucleus. In terms of biological role, transcription factor. Plays a role in the epithelialization of somitic mesoderm and in the development of cardiac mesoderm. Defines the rostrocaudal patterning of the somites by participating in distinct Notch pathways. In Homo sapiens (Human), this protein is Mesoderm posterior protein 1 (MESP1).